The sequence spans 251 residues: Chloride intracellular channel protein 5 (251 aa).

A required for insertion into the membrane region spans residues 1–98; the sequence is MTDSATTNGD…EEFLEETLTP (98 aa). A G-site motif is present at residues 32-35; that stretch reads CPFS. Residues 34–54 traverse the membrane as a helical segment; sequence FSQRLFMILWLKGVVFNVTTV. The GST C-terminal domain maps to 101–241; the sequence is YPKLAAKHRE…AADSEIELAY (141 aa).

This sequence belongs to the chloride channel CLIC family. Component of a multimeric complex consisting of several cytoskeletal proteins, including actin, ezrin, alpha-actinin, gelsolin, and IQGAP1. Interacts with AKAP9. Interacts with TPRN. TPRN, CLIC5 and PTPQR form concentric rings at the base of stereocilia and may form a complex. Interacts with EZR, MYO6 and RDX; the proteins may work together as a complex to stabilize linkages between the plasma membrane and subjacent actin cytoskeleton at the stereocilium base. In terms of tissue distribution, detected in lung and inner ear. Detected in embryonic cochlea, on microvilli-covered apical surfaces of interdental cells, columnar cells of Kolliker's organ, and on stereocilia of inner and outer hair cells (at protein level). Also detected in the eye, where it localizes to lens fiber cells in the lens epithelium (at protein level).

Its subcellular location is the golgi apparatus. It is found in the cytoplasm. It localises to the cytoskeleton. The protein resides in the microtubule organizing center. The protein localises to the centrosome. Its subcellular location is the cell cortex. It is found in the membrane. It localises to the apical cell membrane. The protein resides in the mitochondrion. The protein localises to the cell projection. Its subcellular location is the stereocilium. The catalysed reaction is Na(+)(in) = Na(+)(out). The enzyme catalyses K(+)(in) = K(+)(out). It carries out the reaction chloride(in) = chloride(out). With respect to regulation, inhibited by F-actin. Its function is as follows. In the soluble state, catalyzes glutaredoxin-like thiol disulfide exchange reactions with reduced glutathione as electron donor. Can insert into membranes and form non-selective ion channels almost equally permeable to Na(+), K(+) and Cl(-). Required for normal hearing. Necessary for the formation of stereocilia in the inner ear and normal development of the organ of Corti. Required for the proper localization of PTPRQ and RDX to the stereocilium base during postnatal maturation of hair bundles. Can insert into membranes and form poorly selective ion channels that may also transport chloride ions. Required for the development and/or maintenance of the proper glomerular endothelial cell and podocyte architecture. Plays a role in formation of the lens suture in the eye, which is important for normal optical properties of the lens. This is Chloride intracellular channel protein 5 (Clic5) from Mus musculus (Mouse).